Reading from the N-terminus, the 86-residue chain is UPF0367 protein NATL1_01981 (86 aa).

This sequence belongs to the UPF0367 family.

This chain is UPF0367 protein NATL1_01981, found in Prochlorococcus marinus (strain NATL1A).